Here is a 522-residue protein sequence, read N- to C-terminus: Maturase K (522 aa).

This sequence belongs to the intron maturase 2 family. MatK subfamily.

The protein localises to the plastid. The protein resides in the chloroplast. In terms of biological role, usually encoded in the trnK tRNA gene intron. Probably assists in splicing its own and other chloroplast group II introns. In Watsonia angusta, this protein is Maturase K.